A 155-amino-acid polypeptide reads, in one-letter code: MTDEGLTEGLLISPIRNGTVIDHIKGGEGLNVLRILGLTGTCTVSLSVATNVTSRQMGRKDIVKIENRELLKEEVDRIALIAPQSSINIIREFRVFDKKGVDIPNQICGVIRCPNPGCITNTNEPVTSRFTIQQSGLRCHYCDWLITKDIASHII.

Positions 113, 118, 139, and 142 each coordinate Zn(2+).

The protein belongs to the PyrI family. As to quaternary structure, contains catalytic and regulatory chains. Zn(2+) serves as cofactor.

Functionally, involved in allosteric regulation of aspartate carbamoyltransferase. This Methanosphaerula palustris (strain ATCC BAA-1556 / DSM 19958 / E1-9c) protein is Aspartate carbamoyltransferase regulatory chain.